We begin with the raw amino-acid sequence, 229 residues long: Aldehyde oxidoreductase iron-sulfur-binding subunit PaoA (229 aa).

The interval 1 to 21 is disordered; that stretch reads MSNQGEYPEDNRVGKHEPHDL. The tat-type signal signal peptide spans 1-53; the sequence is MSNQGEYPEDNRVGKHEPHDLSLTRRDLIKVSAATAAAAVVYPHSTLAASVPA. Basic and acidic residues predominate over residues 9-21; it reads EDNRVGKHEPHDL. The 77-residue stretch at 61 to 137 folds into the 2Fe-2S ferredoxin-type domain; it reads MPLTLKVNGK…GAEITTIEGL (77 aa). 9 residues coordinate [2Fe-2S] cluster: cysteine 99, cysteine 104, glycine 105, cysteine 107, cysteine 119, cysteine 158, cysteine 161, cysteine 208, and cysteine 210.

In terms of assembly, heterotrimer composed of PaoA, PaoB and PaoC. The cofactor is [2Fe-2S] cluster. Post-translationally, exported by the Tat system. The position of the signal peptide cleavage has not been experimentally proven.

It is found in the periplasm. It catalyses the reaction an aldehyde + A + H2O = a carboxylate + AH2 + H(+). Its function is as follows. Oxidizes aldehydes to the corresponding carboxylic acids with a preference for aromatic aldehydes. It might play a role in the detoxification of aldehydes to avoid cell damage. The polypeptide is Aldehyde oxidoreductase iron-sulfur-binding subunit PaoA (Escherichia coli O157:H7).